The chain runs to 406 residues: Aspartokinase (406 aa).

In terms of domain architecture, ACT spans 342–406 (IIGHGIKNDL…LLKISETGHC (65 aa)).

It belongs to the aspartokinase family.

The enzyme catalyses L-aspartate + ATP = 4-phospho-L-aspartate + ADP. It participates in amino-acid biosynthesis; L-lysine biosynthesis via DAP pathway; (S)-tetrahydrodipicolinate from L-aspartate: step 1/4. It functions in the pathway amino-acid biosynthesis; L-methionine biosynthesis via de novo pathway; L-homoserine from L-aspartate: step 1/3. Its pathway is amino-acid biosynthesis; L-threonine biosynthesis; L-threonine from L-aspartate: step 1/5. This chain is Aspartokinase (lysC), found in Rickettsia bellii (strain RML369-C).